A 279-amino-acid polypeptide reads, in one-letter code: Acyl-[acyl-carrier-protein]--UDP-N-acetylglucosamine O-acyltransferase (279 aa).

This sequence belongs to the transferase hexapeptide repeat family. LpxA subfamily. As to quaternary structure, homotrimer.

The protein localises to the cytoplasm. It carries out the reaction a (3R)-hydroxyacyl-[ACP] + UDP-N-acetyl-alpha-D-glucosamine = a UDP-3-O-[(3R)-3-hydroxyacyl]-N-acetyl-alpha-D-glucosamine + holo-[ACP]. The protein operates within glycolipid biosynthesis; lipid IV(A) biosynthesis; lipid IV(A) from (3R)-3-hydroxytetradecanoyl-[acyl-carrier-protein] and UDP-N-acetyl-alpha-D-glucosamine: step 1/6. In terms of biological role, involved in the biosynthesis of lipid A, a phosphorylated glycolipid that anchors the lipopolysaccharide to the outer membrane of the cell. In Mesorhizobium japonicum (strain LMG 29417 / CECT 9101 / MAFF 303099) (Mesorhizobium loti (strain MAFF 303099)), this protein is Acyl-[acyl-carrier-protein]--UDP-N-acetylglucosamine O-acyltransferase.